Here is a 317-residue protein sequence, read N- to C-terminus: Taste receptor type 2 member 14 (317 aa).

Over 1-7 (MGGVIKS) the chain is Extracellular. A helical transmembrane segment spans residues 8-28 (IFTFVLIVEFIIGNLGNSFIA). At 29–55 (LVNCIDWVKGRKISSVDRILTALAISK) the chain is on the cytoplasmic side. Residues 56–76 (ISLVWLIFGSWCVSVFFPALF) form a helical membrane-spanning segment. Over 77–87 (ATEKMFRMLTN) the chain is Extracellular. Positions 86 and 89 each coordinate cholesterol. The chain crosses the membrane as a helical span at residues 88-108 (IWTVINHFSVWLATGLGTFYF). The Cytoplasmic segment spans residues 109-129 (LKIANFSNSIFLYLKWRVKKV). Residues 130–150 (VLVLLLVTSVFLFLNIALINI) form a helical membrane-spanning segment. The Extracellular segment spans residues 151 to 184 (HINASINGYRRNKTCSSDSSNFTRFSSLIVLTST). N-linked (GlcNAc...) asparagine glycosylation is found at Asn153, Asn162, and Asn171. Residue Val180 participates in cholesterol binding. Residues 185 to 205 (VFIFIPFTLSLAMFLLLIFSM) form a helical membrane-spanning segment. The Cytoplasmic segment spans residues 206–232 (WKHRKKMQHTVKRSGDASTKAHRGVKS). A helical membrane pass occupies residues 233–253 (MMTFFLLYAIFSLSFFISVWT). Residues 254 to 261 (SERLEENL) are Extracellular-facing. The helical transmembrane segment at 262–282 (IILSQVMGMAYPSCHSCVLIL) threads the bilayer. Ser265 and Met268 together coordinate cholesterol. Residues 283 to 317 (GNKKLRQASLSVLLWLRYMFKDGEPSGHKEFRESS) are Cytoplasmic-facing.

The protein belongs to the G-protein coupled receptor T2R family. As to quaternary structure, core component of the TAS2R14-GNAI1 complex, consisting of TAS2R14, GNAI1, GNB1 and GNG2; within the complex interacts with GNAI1. Core component of the TAS2R14-GNAT3 complex, consisting of TAS2R14, GNAT3, GNB1 and GNG2; within the complex interacts with GNAT3. Core component of the TAS2R14-GNAS2 complex, consisting of TAS2R14, GNAS2, GNB1 and GNG2; within the complex interacts with GNAS2.

Its subcellular location is the membrane. It carries out the reaction Ca(2+)(in) = Ca(2+)(out). It catalyses the reaction 3',5'-cyclic AMP(in) = 3',5'-cyclic AMP(out). Basal activity is enhanced by binding to bitter tastants, such as flufenamic acid and aristolochic acid. Regulated by cholesterol in a concentration-dependent manner. Functionally, gustducin-linked G-protein coupled receptor that plays a role in the perception of bitterness. The activity of this receptor stimulates GNAT3, activating the gustducin G-protein pathway. Likely plays a role in sensing the chemical composition of the gastrointestinal content and other extra-oral tissues via the inhibitory G-protein pathways. The chain is Taste receptor type 2 member 14 (TAS2R14) from Pan paniscus (Pygmy chimpanzee).